Reading from the N-terminus, the 290-residue chain is Pyridoxal kinase PdxY (290 aa).

Substrate is bound by residues S12 and 47–48 (TQ). Residues D114, E151, K184, and 211–214 (RPLL) contribute to the ATP site. D225 contributes to the substrate binding site.

The protein belongs to the pyridoxine kinase family. PdxY subfamily. In terms of assembly, homodimer. Mg(2+) is required as a cofactor.

It catalyses the reaction pyridoxal + ATP = pyridoxal 5'-phosphate + ADP + H(+). It participates in cofactor metabolism; pyridoxal 5'-phosphate salvage; pyridoxal 5'-phosphate from pyridoxal: step 1/1. In terms of biological role, pyridoxal kinase involved in the salvage pathway of pyridoxal 5'-phosphate (PLP). Catalyzes the phosphorylation of pyridoxal to PLP. The chain is Pyridoxal kinase PdxY from Pseudomonas entomophila (strain L48).